Reading from the N-terminus, the 199-residue chain is Superoxide dismutase [Cu-Zn] (199 aa).

A signal peptide spans 1 to 22 (MKLTKVALFSLGLFGFSSMALA). Histidine 92, histidine 94, and histidine 117 together coordinate Cu cation. The cysteines at positions 99 and 195 are disulfide-linked. Residues histidine 117, histidine 126, histidine 135, and aspartate 138 each coordinate Zn(2+). Histidine 173 serves as a coordination point for Cu cation.

This sequence belongs to the Cu-Zn superoxide dismutase family. In terms of assembly, homodimer. Cu cation is required as a cofactor. Zn(2+) serves as cofactor.

Its subcellular location is the periplasm. The enzyme catalyses 2 superoxide + 2 H(+) = H2O2 + O2. Functionally, destroys radicals which are normally produced within the cells and which are toxic to biological systems. May play a role in the interactive biology of organisms with their hosts and so contribute to their capacity to cause disease. The polypeptide is Superoxide dismutase [Cu-Zn] (sodC) (Haemophilus ducreyi (strain 35000HP / ATCC 700724)).